The sequence spans 248 residues: Pulmonary surfactant-associated protein A (248 aa).

A signal peptide spans 1–17; that stretch reads MWLRCLALALTLLMVSG. Asn-20 carries an N-linked (GlcNAc...) asparagine glycan. Residues 28-100 enclose the Collagen-like domain; sequence GNPGIPGTPG…PGERGPPGLP (73 aa). The interval 29-103 is disordered; it reads NPGIPGTPGS…RGPPGLPASL (75 aa). 4-hydroxyproline is present on residues Pro-30, Pro-33, Pro-36, Pro-42, Pro-54, Pro-57, Pro-63, Pro-67, and Pro-70. The span at 42-51 shows a compositional bias: basic and acidic residues; sequence PGRDGRDGVK. A compositionally biased stretch (pro residues) spans 54-65; that stretch reads PGPPGPLGPPGG. Over residues 84 to 93 the composition is skewed to basic and acidic residues; the sequence is ERGEKGEPGE. One can recognise a C-type lectin domain in the interval 132 to 248; it reads LVVGRKVFSS…LQYRLAICEF (117 aa). Intrachain disulfides connect Cys-155–Cys-246 and Cys-224–Cys-238. The N-linked (GlcNAc...) asparagine glycan is linked to Asn-207. 3 residues coordinate Ca(2+): Glu-215, Arg-217, and Asn-234.

This sequence belongs to the SFTPA family. As to quaternary structure, oligomeric complex of 6 set of homotrimers.

It is found in the secreted. The protein resides in the extracellular space. It localises to the extracellular matrix. Its subcellular location is the surface film. Its function is as follows. In presence of calcium ions, it binds to surfactant phospholipids and contributes to lower the surface tension at the air-liquid interface in the alveoli of the mammalian lung and is essential for normal respiration. Enhances the expression of MYO18A/SP-R210 on alveolar macrophages. This Canis lupus familiaris (Dog) protein is Pulmonary surfactant-associated protein A (SFTPA1).